The sequence spans 171 residues: Large ribosomal subunit protein uL10 (171 aa).

It belongs to the universal ribosomal protein uL10 family. Part of the ribosomal stalk of the 50S ribosomal subunit. The N-terminus interacts with L11 and the large rRNA to form the base of the stalk. The C-terminus forms an elongated spine to which L12 dimers bind in a sequential fashion forming a multimeric L10(L12)X complex.

Its function is as follows. Forms part of the ribosomal stalk, playing a central role in the interaction of the ribosome with GTP-bound translation factors. In Nitrosomonas eutropha (strain DSM 101675 / C91 / Nm57), this protein is Large ribosomal subunit protein uL10.